Consider the following 21-residue polypeptide: Cytoplasmic filament protein A (21 aa).

The disordered stretch occupies residues 1–21 (AILELPQSPNVFHPEKPSAVG).

It localises to the cytoplasm. In terms of biological role, component of the cytoplasmic filaments that run the length of the organism just underneath the cytoplasmic membrane. The protein is Cytoplasmic filament protein A (cfpA) of Treponema phagedenis.